Consider the following 326-residue polypeptide: Mitochondrial glycine transporter (326 aa).

Solcar repeat units lie at residues 22-106 (SKTT…LRTS), 135-216 (SANL…LKRY), and 228-312 (SSSS…LILR). The next 6 membrane-spanning stretches (helical) occupy residues 28-53 (FGAG…TRVQ), 81-107 (GTLP…RTSL), 138-163 (LATG…VRYE), 191-214 (GFGA…EQLK), 232-258 (INFV…KTRL), and 287-305 (GLGL…AWTV).

The protein belongs to the mitochondrial carrier (TC 2.A.29) family. SLC25A38 subfamily.

Its subcellular location is the mitochondrion inner membrane. The enzyme catalyses glycine(in) = glycine(out). In terms of biological role, mitochondrial glycine transporter that imports glycine into the mitochondrial matrix. Plays an important role in providing glycine for the first enzymatic step in heme biosynthesis, the condensation of glycine with succinyl-CoA to produce 5-aminolevulinate (ALA) in the mitochondrial matrix. The polypeptide is Mitochondrial glycine transporter (Emericella nidulans (strain FGSC A4 / ATCC 38163 / CBS 112.46 / NRRL 194 / M139) (Aspergillus nidulans)).